A 502-amino-acid polypeptide reads, in one-letter code: MTLGSFRRGLLMLSVAFGLTRGDLAKPSKLVNCTCESPHCKRPFCQGSWCTVVLVREQGRHPQVYRGCGSLNQELCLGRPTEFLNHHCCYRSFCNHNVSLMLEATQTPSEEPEVDAHLPLILGPVLALPVLVALGALGLWRVRRRQEKQRDLHSDLGESSLILKASEQADSMLGDFLDSDCTTGSGSGLPFLVQRTVARQVALVECVGKGRYGEVWRGSWHGESVAVKIFSSRDEQSWFRETEIYNTVLLRHDNILGFIASDMTSRNSSTQLWLITHYHEHGSLYDFLQRQTLEPQLALRLAVSAACGLAHLHVEIFGTQGKPAIAHRDLKSRNVLVKSNLQCCIADLGLAVMHSQSSDYLDIGNNPRVGTKRYMAPEVLDEHIRTDCFESYKWTDIWAFGLVLWEIARRTIINGIVEDYRPPFYDMVPNDPSFEDMKKVVCVDQQTPTIPNRLAADPVLSGLAQMMRECWYPNPSARLTALRIKKTLQKLSHNPEKPKVIH.

The N-terminal stretch at 1-22 is a signal peptide; the sequence is MTLGSFRRGLLMLSVAFGLTRG. Residues 23–119 lie on the Extracellular side of the membrane; it reads DLAKPSKLVN…EEPEVDAHLP (97 aa). Residue Asn-32 is glycosylated (N-linked (GlcNAc...) asparagine). Cystine bridges form between Cys-33/Cys-50, Cys-35/Cys-40, and Cys-45/Cys-68. Residues 72 to 75 are mediates specificity for BMP ligand; it reads NQEL. 2 disulfides stabilise this stretch: Cys-76–Cys-88 and Cys-89–Cys-94. An N-linked (GlcNAc...) asparagine glycan is attached at Asn-97. The chain crosses the membrane as a helical span at residues 120–140; sequence LILGPVLALPVLVALGALGLW. Over 141–502 the chain is Cytoplasmic; that stretch reads RVRRRQEKQR…HNPEKPKVIH (362 aa). 3 positions are modified to phosphoserine: Ser-154, Ser-159, and Ser-160. Residues 171 to 200 form the GS domain; it reads SMLGDFLDSDCTTGSGSGLPFLVQRTVARQ. Residues 201-502 enclose the Protein kinase domain; that stretch reads VALVECVGKG…HNPEKPKVIH (302 aa). Residues 207–215 and Lys-228 contribute to the ATP site; that span reads VGKGRYGEV. Catalysis depends on Asp-329, which acts as the Proton acceptor.

Belongs to the protein kinase superfamily. TKL Ser/Thr protein kinase family. TGFB receptor subfamily. In terms of assembly, interacts with TSC22D1/TSC-22. It depends on Mg(2+) as a cofactor. Mn(2+) serves as cofactor.

It is found in the cell membrane. It catalyses the reaction L-threonyl-[receptor-protein] + ATP = O-phospho-L-threonyl-[receptor-protein] + ADP + H(+). It carries out the reaction L-seryl-[receptor-protein] + ATP = O-phospho-L-seryl-[receptor-protein] + ADP + H(+). Functionally, type I receptor for TGF-beta family ligands BMP9/GDF2 and BMP10 and important regulator of normal blood vessel development. On ligand binding, forms a receptor complex consisting of two type II and two type I transmembrane serine/threonine kinases. Type II receptors phosphorylate and activate type I receptors which autophosphorylate, then bind and activate SMAD transcriptional regulators. May bind activin as well. The sequence is that of Activin receptor type-1-like (Acvrl1) from Mus musculus (Mouse).